The sequence spans 426 residues: Histidine--tRNA ligase (426 aa).

This sequence belongs to the class-II aminoacyl-tRNA synthetase family. Homodimer.

Its subcellular location is the cytoplasm. It catalyses the reaction tRNA(His) + L-histidine + ATP = L-histidyl-tRNA(His) + AMP + diphosphate + H(+). The sequence is that of Histidine--tRNA ligase from Lactiplantibacillus plantarum (strain ATCC BAA-793 / NCIMB 8826 / WCFS1) (Lactobacillus plantarum).